The primary structure comprises 232 residues: Large ribosomal subunit protein uL1 (232 aa).

The protein belongs to the universal ribosomal protein uL1 family. In terms of assembly, part of the 50S ribosomal subunit.

Binds directly to 23S rRNA. The L1 stalk is quite mobile in the ribosome, and is involved in E site tRNA release. In terms of biological role, protein L1 is also a translational repressor protein, it controls the translation of the L11 operon by binding to its mRNA. In Burkholderia vietnamiensis (strain G4 / LMG 22486) (Burkholderia cepacia (strain R1808)), this protein is Large ribosomal subunit protein uL1.